The sequence spans 665 residues: F-box/WD repeat-containing protein lin-23 (665 aa).

Residues 81–127 (RDFISNLPAHLVELILFNVNSDSLKSCEEVSTSWRCALARGQHWKKL) form the F-box domain. WD repeat units lie at residues 220–257 (ENSK…CSRI), 260–299 (GHTG…KTLI), 301–337 (HCEA…DITI), 343–380 (GHRA…FVRT), 383–420 (GHRR…CLRV), 423–460 (GHEE…DPRA), and 472–509 (QHTG…PSGL). The disordered stretch occupies residues 574-665 (AAAEAARGAG…VDEEMPDGGP (92 aa)). 2 stretches are compositionally biased toward acidic residues: residues 584–595 (DNDESSSEEDLD) and 655–665 (DVDEEMPDGGP).

Part of a SCF (SKP1-cullin-F-box) protein ligase complex.

Its subcellular location is the cytoplasm. Functionally, functions cell autonomously to negatively regulate cell cycle progression. Required to restrain cell proliferation in response to developmental cues. Probably recognizes and binds to some proteins and promotes their ubiquitination and degradation. In Caenorhabditis elegans, this protein is F-box/WD repeat-containing protein lin-23 (lin-23).